Consider the following 47-residue polypeptide: Photosystem II reaction center protein K (47 aa).

Positions 1 to 10 are excised as a propeptide; that stretch reads MASFTLDLLA. A helical membrane pass occupies residues 19-39; it reads FSPLIDILPLIPVFFLLLAFV.

Belongs to the PsbK family. As to quaternary structure, PSII is composed of 1 copy each of membrane proteins PsbA, PsbB, PsbC, PsbD, PsbE, PsbF, PsbH, PsbI, PsbJ, PsbK, PsbL, PsbM, PsbT, PsbX, PsbY, PsbZ, Psb30/Ycf12, peripheral proteins PsbO, CyanoQ (PsbQ), PsbU, PsbV and a large number of cofactors. It forms dimeric complexes.

The protein resides in the cellular thylakoid membrane. Functionally, one of the components of the core complex of photosystem II (PSII). PSII is a light-driven water:plastoquinone oxidoreductase that uses light energy to abstract electrons from H(2)O, generating O(2) and a proton gradient subsequently used for ATP formation. It consists of a core antenna complex that captures photons, and an electron transfer chain that converts photonic excitation into a charge separation. The chain is Photosystem II reaction center protein K from Parasynechococcus marenigrum (strain WH8102).